The sequence spans 448 residues: Bifunctional protein GlmU (448 aa).

Residues 1 to 232 form a pyrophosphorylase region; sequence MSDRSLLVVV…ADEVAGVNSR (232 aa). Residues 11–14, K25, Q78, and 83–84 each bind UDP-N-acetyl-alpha-D-glucosamine; these read LAAG and GT. D108 lines the Mg(2+) pocket. Residues G144, E158, N173, and N230 each contribute to the UDP-N-acetyl-alpha-D-glucosamine site. N230 contributes to the Mg(2+) binding site. Residues 233 to 253 form a linker region; that stretch reads VQLAEAEAILQRRLRLAAMAG. The tract at residues 254–448 is N-acetyltransferase; the sequence is GATLVAPETV…FRAARSKPKG (195 aa). UDP-N-acetyl-alpha-D-glucosamine contacts are provided by R319 and K337. Catalysis depends on H349, which acts as the Proton acceptor. Residues Y352 and N363 each coordinate UDP-N-acetyl-alpha-D-glucosamine. Acetyl-CoA is bound by residues A366, 372–373, T409, and R426; that span reads NY.

This sequence in the N-terminal section; belongs to the N-acetylglucosamine-1-phosphate uridyltransferase family. In the C-terminal section; belongs to the transferase hexapeptide repeat family. Homotrimer. The cofactor is Mg(2+).

It localises to the cytoplasm. It carries out the reaction alpha-D-glucosamine 1-phosphate + acetyl-CoA = N-acetyl-alpha-D-glucosamine 1-phosphate + CoA + H(+). The enzyme catalyses N-acetyl-alpha-D-glucosamine 1-phosphate + UTP + H(+) = UDP-N-acetyl-alpha-D-glucosamine + diphosphate. It participates in nucleotide-sugar biosynthesis; UDP-N-acetyl-alpha-D-glucosamine biosynthesis; N-acetyl-alpha-D-glucosamine 1-phosphate from alpha-D-glucosamine 6-phosphate (route II): step 2/2. Its pathway is nucleotide-sugar biosynthesis; UDP-N-acetyl-alpha-D-glucosamine biosynthesis; UDP-N-acetyl-alpha-D-glucosamine from N-acetyl-alpha-D-glucosamine 1-phosphate: step 1/1. It functions in the pathway bacterial outer membrane biogenesis; LPS lipid A biosynthesis. Its function is as follows. Catalyzes the last two sequential reactions in the de novo biosynthetic pathway for UDP-N-acetylglucosamine (UDP-GlcNAc). The C-terminal domain catalyzes the transfer of acetyl group from acetyl coenzyme A to glucosamine-1-phosphate (GlcN-1-P) to produce N-acetylglucosamine-1-phosphate (GlcNAc-1-P), which is converted into UDP-GlcNAc by the transfer of uridine 5-monophosphate (from uridine 5-triphosphate), a reaction catalyzed by the N-terminal domain. The sequence is that of Bifunctional protein GlmU from Xanthobacter autotrophicus (strain ATCC BAA-1158 / Py2).